A 309-amino-acid chain; its full sequence is tRNA dimethylallyltransferase (309 aa).

Position 10-17 (10-17 (GPTASGKT)) interacts with ATP. 12 to 17 (TASGKT) is a binding site for substrate. Interaction with substrate tRNA stretches follow at residues 35–38 (DSAL) and 240–245 (RCVGYR).

It belongs to the IPP transferase family. In terms of assembly, monomer. It depends on Mg(2+) as a cofactor.

It catalyses the reaction adenosine(37) in tRNA + dimethylallyl diphosphate = N(6)-dimethylallyladenosine(37) in tRNA + diphosphate. Functionally, catalyzes the transfer of a dimethylallyl group onto the adenine at position 37 in tRNAs that read codons beginning with uridine, leading to the formation of N6-(dimethylallyl)adenosine (i(6)A). The polypeptide is tRNA dimethylallyltransferase (Baumannia cicadellinicola subsp. Homalodisca coagulata).